The chain runs to 205 residues: Transcriptional regulatory protein PdtaR (205 aa).

The region spanning 15–129 (RVLIAEDEAL…DLIPAIELAV (115 aa)) is the Response regulatory domain. Asp-65 bears the 4-aspartylphosphate mark. Positions 135–196 (ITALEGEVAT…TMKRVAEVVL (62 aa)) constitute an ANTAR domain.

Phosphorylated and activated by PdtaS.

It localises to the cytoplasm. Functionally, member of the two-component regulatory system PdtaR/PdtaS. This two-component system plays an essential role in mycobacterial adaptation to poor nutrient conditions. PdtaR probably acts at the level of transcriptional antitermination rather than transcriptional initiation. In addition, the PdtaR/PdtaS two-component system controls copper and nitric oxide (NO) resistance downstream of the intramembrane protease Rip1. This coupled Rip1/PdtaS/PdtaR circuit controls NO resistance and acute lung infection in mice by relieving PdtaR/PdtaS-mediated repression of isonitrile chalkophore biosynthesis. Two signals are required to fully inactivate the PdtaR/PdtaS system and mediate NO resistance: a cytoplasmic inhibitory signal through the PdtaS kinase mediated by direct sensing of NO and the production of PPE1-5', an NO-induced small RNA, to sequester PdtaR. This is Transcriptional regulatory protein PdtaR (pdtaR) from Mycobacterium tuberculosis (strain CDC 1551 / Oshkosh).